The primary structure comprises 157 residues: 2-amino-4-hydroxy-6-hydroxymethyldihydropteridine pyrophosphokinase (157 aa).

It belongs to the HPPK family.

The catalysed reaction is 6-hydroxymethyl-7,8-dihydropterin + ATP = (7,8-dihydropterin-6-yl)methyl diphosphate + AMP + H(+). It participates in cofactor biosynthesis; tetrahydrofolate biosynthesis; 2-amino-4-hydroxy-6-hydroxymethyl-7,8-dihydropteridine diphosphate from 7,8-dihydroneopterin triphosphate: step 4/4. Its function is as follows. Catalyzes the transfer of pyrophosphate from adenosine triphosphate (ATP) to 6-hydroxymethyl-7,8-dihydropterin, an enzymatic step in folate biosynthesis pathway. This Campylobacter jejuni subsp. jejuni serotype O:2 (strain ATCC 700819 / NCTC 11168) protein is 2-amino-4-hydroxy-6-hydroxymethyldihydropteridine pyrophosphokinase (folK).